Here is a 67-residue protein sequence, read N- to C-terminus: UPF0434 protein RALTA_A0561 (67 aa).

This sequence belongs to the UPF0434 family.

In Cupriavidus taiwanensis (strain DSM 17343 / BCRC 17206 / CCUG 44338 / CIP 107171 / LMG 19424 / R1) (Ralstonia taiwanensis (strain LMG 19424)), this protein is UPF0434 protein RALTA_A0561.